A 423-amino-acid chain; its full sequence is Histidine--tRNA ligase 2 (423 aa).

This sequence belongs to the class-II aminoacyl-tRNA synthetase family. Homodimer.

It localises to the cytoplasm. The catalysed reaction is tRNA(His) + L-histidine + ATP = L-histidyl-tRNA(His) + AMP + diphosphate + H(+). This Bacillus anthracis protein is Histidine--tRNA ligase 2.